The following is a 230-amino-acid chain: 2,3-bisphosphoglycerate-dependent phosphoglycerate mutase (230 aa).

Residues arginine 8–asparagine 15, threonine 21–glycine 22, arginine 60, glutamate 87–tyrosine 90, lysine 98, and arginine 114–arginine 115 contribute to the substrate site. Residue histidine 9 is the Tele-phosphohistidine intermediate of the active site. Glutamate 87 (proton donor/acceptor) is an active-site residue. The interval tyrosine 117–proline 143 is disordered. The span at aspartate 128 to arginine 137 shows a compositional bias: basic and acidic residues. Residue glycine 183–asparagine 184 coordinates substrate.

Belongs to the phosphoglycerate mutase family. BPG-dependent PGAM subfamily. Homodimer.

The catalysed reaction is (2R)-2-phosphoglycerate = (2R)-3-phosphoglycerate. Its pathway is carbohydrate degradation; glycolysis; pyruvate from D-glyceraldehyde 3-phosphate: step 3/5. In terms of biological role, catalyzes the interconversion of 2-phosphoglycerate and 3-phosphoglycerate. The polypeptide is 2,3-bisphosphoglycerate-dependent phosphoglycerate mutase (Halorhodospira halophila (strain DSM 244 / SL1) (Ectothiorhodospira halophila (strain DSM 244 / SL1))).